Reading from the N-terminus, the 234-residue chain is Urease subunit alpha (234 aa).

The urease gamma stretch occupies residues 1–102 (MKLTPKELDK…LVTIHTPVEA (102 aa)). Residues 103 to 234 (GSDKLAPGEV…GTINCGCDNK (132 aa)) form a urease beta region.

In the N-terminal section; belongs to the urease gamma subunit family. This sequence in the C-terminal section; belongs to the urease beta subunit family. In terms of assembly, heterohexamer of 3 UreA (alpha) and 3 UreB (beta) subunits.

It localises to the cytoplasm. The enzyme catalyses urea + 2 H2O + H(+) = hydrogencarbonate + 2 NH4(+). It functions in the pathway nitrogen metabolism; urea degradation; CO(2) and NH(3) from urea (urease route): step 1/1. This is Urease subunit alpha from Helicobacter heilmannii.